The primary structure comprises 91 residues: Probable Fe(2+)-trafficking protein (91 aa).

It belongs to the Fe(2+)-trafficking protein family.

Could be a mediator in iron transactions between iron acquisition and iron-requiring processes, such as synthesis and/or repair of Fe-S clusters in biosynthetic enzymes. In Cupriavidus metallidurans (strain ATCC 43123 / DSM 2839 / NBRC 102507 / CH34) (Ralstonia metallidurans), this protein is Probable Fe(2+)-trafficking protein.